Here is a 590-residue protein sequence, read N- to C-terminus: Melanophilin (590 aa).

A RabBD domain is found at 4-124; it reads RLDLSTLTDE…IGSLEWYYQH (121 aa). The FYVE-type zinc finger occupies 64–107; it reads CARCLQPYRLLLNSRRQCLECSLFVCKSCSHAHPEEQGWLCDPC. 5 disordered regions span residues 147 to 182, 215 to 276, 311 to 335, 361 to 472, and 485 to 590; these read GGGG…PLNS, SVPE…AELD, DTSD…ARTV, VLPP…SEIS, and GLTV…AQQP. Positions 154–172 are enriched in acidic residues; it reads SLEEGNGDSEQTDEDGDLD. Over residues 215–238 the composition is skewed to polar residues; that stretch reads SVPESAHSLQSLSGEPYSEDTTSL. A coiled-coil region spans residues 339 to 485; it reads QILELNKRMS…SRIAALRAAG (147 aa). Low complexity predominate over residues 391–401; the sequence is LTSNISGSSTS. The segment covering 424-433 has biased composition (basic and acidic residues); sequence GHMETQERNP.

As to quaternary structure, binds RAB27A that has been activated by GTP-binding via its N-terminus. Binds MYO5A via its C-terminal coiled coil domain. Highly expressed in embryos at day 7; not detectable at day 11. Highly expressed in adult stomach; detected at lower levels in kidney, lung, skin and small intestine. Detected in melanocytes.

Its subcellular location is the melanosome. Its function is as follows. Rab effector protein involved in melanosome transport. Serves as link between melanosome-bound RAB27A and the motor protein MYO5A. The chain is Melanophilin (Mlph) from Mus musculus (Mouse).